The primary structure comprises 1812 residues: Putative surface cell antigen sca2 (1812 aa).

The N-terminal stretch at Met1–Ala17 is a signal peptide. 2 stretches are compositionally biased toward polar residues: residues Phe344–Arg357 and Met371–Ser382. Disordered regions lie at residues Phe344–Ser382, Leu648–Ser691, and Lys1338–Val1462. The segment covering Pro656–Leu685 has biased composition (pro residues). Composition is skewed to basic and acidic residues over residues Ser1349–Asp1367 and Ser1382–Ser1393. Over residues Asp1401–Glu1416 the composition is skewed to acidic residues. The segment covering Ser1417 to Asn1455 has biased composition (low complexity). In terms of domain architecture, Autotransporter spans Glu1533 to Leu1812.

It localises to the cell outer membrane. This Rickettsia sibirica (strain ATCC VR-151 / 246) protein is Putative surface cell antigen sca2 (sca2).